The primary structure comprises 265 residues: Phosphate import ATP-binding protein PstB (265 aa).

The region spanning 11–260 (VSADEVKIAA…PRDPRTESYI (250 aa)) is the ABC transporter domain. 50–57 (GPSGCGKS) is a binding site for ATP.

This sequence belongs to the ABC transporter superfamily. Phosphate importer (TC 3.A.1.7) family. The complex is composed of two ATP-binding proteins (PstB), two transmembrane proteins (PstC and PstA) and a solute-binding protein (PstS).

The protein resides in the cell inner membrane. It carries out the reaction phosphate(out) + ATP + H2O = ADP + 2 phosphate(in) + H(+). Functionally, part of the ABC transporter complex PstSACB involved in phosphate import. Responsible for energy coupling to the transport system. This chain is Phosphate import ATP-binding protein PstB, found in Cereibacter sphaeroides (strain ATCC 17023 / DSM 158 / JCM 6121 / CCUG 31486 / LMG 2827 / NBRC 12203 / NCIMB 8253 / ATH 2.4.1.) (Rhodobacter sphaeroides).